A 303-amino-acid chain; its full sequence is MYIQILGSAAGGGFPQWNCNCANCKGYRDGSLRATARTQSSIALSDDGVHWILCNASPDIRAQLQAFAPMQPARALRDTGINAIVLLDSQIDHTTGLLSLREGCPHQVWCTDMVHQDLTTGFPLFNMLSHWNGGLQWNLIELEGSFVIPACPNLRFTPFPLRSAAPPYSPHRFDPHPGDNLGLLVEDIRTGGKLFYAPGLGQVDDKLLAMMHGADCLLVDGTLWEDDEMQRRGVGTRTGREMGHLAQNGPGGMLEVLDGFPRQRKVLIHINNTNPILDEDSPERAEVQRRGVEVAFDGMSIEL.

Belongs to the PqqB family.

Its pathway is cofactor biosynthesis; pyrroloquinoline quinone biosynthesis. Functionally, may be involved in the transport of PQQ or its precursor to the periplasm. This chain is Coenzyme PQQ synthesis protein B, found in Pseudomonas putida (strain W619).